We begin with the raw amino-acid sequence, 944 residues long: Spindle pole body component 110 (944 aa).

Threonine 18 carries the phosphothreonine modification. Positions 23–110 are disordered; that stretch reads IKSKRNTTQT…RKRNLIDDLK (88 aa). Polar residues predominate over residues 28–46; that stretch reads NTTQTQVVSPTKVPNANNG. The Nuclear localization signal motif lies at 54 to 59; sequence KKRQRR. At serine 60 the chain carries Phosphoserine; by MPS1. Phosphothreonine; by MPS1 is present on residues threonine 64 and threonine 68. Polar residues predominate over residues 67–78; it reads STRLFSEASQFD. Serine 80 carries the phosphoserine modification. The segment covering 96–110 has biased composition (basic and acidic residues); the sequence is NVDKSRKRNLIDDLK. The stretch at 119–799 forms a coiled coil; the sequence is LKEQEVREHQ…ILNERRKDND (681 aa). Serine 529 carries the phosphoserine modification. 2 consecutive short sequence motifs (nuclear localization signal) follow at residues 726-731 and 742-747; these read KEKYKR and RLRREK. Residues 900 to 927 are calmodulin-binding; that stretch reads SFKTVALLVLACVRMKRIAFYRRSDDNR.

The protein belongs to the SPC110 family. In terms of assembly, homodimer. Component of the SPC110 complex containing at least CMD1, SPC29 and SCP110. Interacts with SPC97 and SPC98.

Its subcellular location is the nucleus. The protein localises to the cytoplasm. The protein resides in the cytoskeleton. It is found in the microtubule organizing center. It localises to the spindle pole body. Its function is as follows. Component of the spindle pole body (SPB) required for the proper execution of spindle pole body (SPB) duplication. Potential role in cross-linking filaments or anchoring other molecules. It is essential for growth. The polypeptide is Spindle pole body component 110 (SPC110) (Saccharomyces cerevisiae (strain YJM789) (Baker's yeast)).